The following is a 97-amino-acid chain: Placenta-specific protein 9 (97 aa).

An N-terminal signal peptide occupies residues 1-22; it reads MRPLLCALTGLALLRAAGSLAA.

This sequence belongs to the PLAC9 family.

It is found in the secreted. The protein is Placenta-specific protein 9 (PLAC9) of Homo sapiens (Human).